The chain runs to 514 residues: ATP synthase subunit alpha (514 aa).

Residue 170–177 participates in ATP binding; the sequence is GDRQIGKT.

Belongs to the ATPase alpha/beta chains family. F-type ATPases have 2 components, CF(1) - the catalytic core - and CF(0) - the membrane proton channel. CF(1) has five subunits: alpha(3), beta(3), gamma(1), delta(1), epsilon(1). CF(0) has three main subunits: a(1), b(2) and c(9-12). The alpha and beta chains form an alternating ring which encloses part of the gamma chain. CF(1) is attached to CF(0) by a central stalk formed by the gamma and epsilon chains, while a peripheral stalk is formed by the delta and b chains.

The protein localises to the cell inner membrane. It catalyses the reaction ATP + H2O + 4 H(+)(in) = ADP + phosphate + 5 H(+)(out). Its function is as follows. Produces ATP from ADP in the presence of a proton gradient across the membrane. The alpha chain is a regulatory subunit. This chain is ATP synthase subunit alpha, found in Pseudomonas putida (strain ATCC 700007 / DSM 6899 / JCM 31910 / BCRC 17059 / LMG 24140 / F1).